A 734-amino-acid chain; its full sequence is Methylcrotonoyl-CoA carboxylase subunit alpha, mitochondrial (734 aa).

The N-terminal 25 residues, 1–25, are a transit peptide targeting the mitochondrion; that stretch reads MSMMTVWALRRNVRRKNHSMLVRYI. The Biotin carboxylation domain maps to 37-484; that stretch reads CIEKILVANR…ETHFIEHHKS (448 aa). Lys152, Glu236, and His271 together coordinate ATP. One can recognise an ATP-grasp domain in the interval 156-354; the sequence is KRIMGAAGVP…LVEWQIRVAN (199 aa). 3 residues coordinate Mn(2+): Glu311, Glu325, and Asn327. Arg329 is a catalytic residue. Phosphoserine is present on Ser645. The tract at residues 645–666 is disordered; sequence SEDEEGVQHRTSSETSSHPPGT. Residues 657–733 form the Biotinyl-binding domain; that stretch reads SETSSHPPGT…SDGSALFRIK (77 aa). N6-biotinyllysine is present on Lys699.

As to quaternary structure, probably a heterodimer composed of biotin-containing alpha subunits and beta subunits. The cofactor is biotin. Mn(2+) is required as a cofactor. In terms of tissue distribution, in roots, cotyledons, leaves, flowers, ovaries, siliques and embryos.

The protein resides in the mitochondrion matrix. The enzyme catalyses 3-methylbut-2-enoyl-CoA + hydrogencarbonate + ATP = 3-methyl-(2E)-glutaconyl-CoA + ADP + phosphate + H(+). It participates in amino-acid degradation; L-leucine degradation; (S)-3-hydroxy-3-methylglutaryl-CoA from 3-isovaleryl-CoA: step 2/3. Functionally, biotin-attachment subunit of the 3-methylcrotonyl-CoA carboxylase, an enzyme that catalyzes the conversion of 3-methylcrotonyl-CoA to 3-methylglutaconyl-CoA, a critical step for leucine and isovaleric acid catabolism. The chain is Methylcrotonoyl-CoA carboxylase subunit alpha, mitochondrial (MCCA) from Arabidopsis thaliana (Mouse-ear cress).